The sequence spans 263 residues: Hydroxyacylglutathione hydrolase (263 aa).

Residues His55, His57, Asp59, His60, His117, Asp134, and His172 each coordinate Zn(2+).

It belongs to the metallo-beta-lactamase superfamily. Glyoxalase II family. Monomer. Zn(2+) is required as a cofactor.

It catalyses the reaction an S-(2-hydroxyacyl)glutathione + H2O = a 2-hydroxy carboxylate + glutathione + H(+). The protein operates within secondary metabolite metabolism; methylglyoxal degradation; (R)-lactate from methylglyoxal: step 2/2. In terms of biological role, thiolesterase that catalyzes the hydrolysis of S-D-lactoyl-glutathione to form glutathione and D-lactic acid. The chain is Hydroxyacylglutathione hydrolase from Shewanella baltica (strain OS223).